Reading from the N-terminus, the 226-residue chain is UPF0319 protein YpAngola_A3206 (226 aa).

An N-terminal signal peptide occupies residues 1 to 20; that stretch reads MKLGLVAGMLAVCFSFSSVA.

This sequence belongs to the UPF0319 family.

This Yersinia pestis bv. Antiqua (strain Angola) protein is UPF0319 protein YpAngola_A3206.